A 249-amino-acid polypeptide reads, in one-letter code: Probable transcriptional regulatory protein aq_1575 (249 aa).

This sequence belongs to the TACO1 family.

Its subcellular location is the cytoplasm. The chain is Probable transcriptional regulatory protein aq_1575 from Aquifex aeolicus (strain VF5).